The sequence spans 611 residues: Elongation factor 4 (611 aa).

Residues 12 to 194 form the tr-type G domain; the sequence is SRIRNFSIIA…QIVEKVPAPA (183 aa). GTP contacts are provided by residues 24–29 and 141–144; these read DHGKST and NKID.

It belongs to the TRAFAC class translation factor GTPase superfamily. Classic translation factor GTPase family. LepA subfamily.

Its subcellular location is the cell membrane. It catalyses the reaction GTP + H2O = GDP + phosphate + H(+). Functionally, required for accurate and efficient protein synthesis under certain stress conditions. May act as a fidelity factor of the translation reaction, by catalyzing a one-codon backward translocation of tRNAs on improperly translocated ribosomes. Back-translocation proceeds from a post-translocation (POST) complex to a pre-translocation (PRE) complex, thus giving elongation factor G a second chance to translocate the tRNAs correctly. Binds to ribosomes in a GTP-dependent manner. The chain is Elongation factor 4 from Bacillus velezensis (strain DSM 23117 / BGSC 10A6 / LMG 26770 / FZB42) (Bacillus amyloliquefaciens subsp. plantarum).